We begin with the raw amino-acid sequence, 319 residues long: Formimidoylglutamase (319 aa).

Mn(2+) contacts are provided by H131, D154, H156, D158, C248, and D250.

This sequence belongs to the arginase family. The cofactor is Mn(2+).

The enzyme catalyses N-formimidoyl-L-glutamate + H2O = formamide + L-glutamate. The protein operates within amino-acid degradation; L-histidine degradation into L-glutamate; L-glutamate from N-formimidoyl-L-glutamate (hydrolase route): step 1/1. Its function is as follows. Catalyzes the conversion of N-formimidoyl-L-glutamate to L-glutamate and formamide. In Legionella pneumophila (strain Lens), this protein is Formimidoylglutamase.